Reading from the N-terminus, the 107-residue chain is Iron-binding protein IscA (107 aa).

Positions 35, 99, and 101 each coordinate Fe cation.

Belongs to the HesB/IscA family. As to quaternary structure, homodimer; may form tetramers and higher multimers. Fe cation is required as a cofactor.

In terms of biological role, is able to transfer iron-sulfur clusters to apo-ferredoxin. Multiple cycles of [2Fe2S] cluster formation and transfer are observed, suggesting that IscA acts catalytically. Recruits intracellular free iron so as to provide iron for the assembly of transient iron-sulfur cluster in IscU in the presence of IscS, L-cysteine and the thioredoxin reductase system TrxA/TrxB. The chain is Iron-binding protein IscA from Klebsiella pneumoniae (strain 342).